A 265-amino-acid polypeptide reads, in one-letter code: Endochitinase At2g43580 (265 aa).

The first 24 residues, 1–24, serve as a signal peptide directing secretion; the sequence is MALTKIFLILLLSLLGLYSETVKS. Residues 25–59 form the Chitin-binding type-1 domain; sequence QNCDCAPNLCCSQFGYCGTTADYCGSTCQSGPCRV. Intrachain disulfides connect Cys27–Cys35, Cys29–Cys41, Cys34–Cys48, and Cys52–Cys57. The tract at residues 67–265 is catalytic; it reads GLVGNIVTQI…GLDPGANITC (199 aa). A glycan (N-linked (GlcNAc...) asparagine) is linked at Asn102. The active-site Proton donor is the Glu129. An N-linked (GlcNAc...) asparagine glycan is attached at Asn262.

This sequence belongs to the glycosyl hydrolase 19 family. Chitinase class I subfamily.

The catalysed reaction is Random endo-hydrolysis of N-acetyl-beta-D-glucosaminide (1-&gt;4)-beta-linkages in chitin and chitodextrins.. The sequence is that of Endochitinase At2g43580 from Arabidopsis thaliana (Mouse-ear cress).